The following is a 370-amino-acid chain: Glycerophosphodiester phosphodiesterase GDPD3 (370 aa).

The region spanning Phe-35–Ile-322 is the GP-PDE domain.

Belongs to the glycerophosphoryl diester phosphodiesterase family. As to expression, expressed in flowers and siliques.

It catalyses the reaction a sn-glycero-3-phosphodiester + H2O = an alcohol + sn-glycerol 3-phosphate + H(+). The sequence is that of Glycerophosphodiester phosphodiesterase GDPD3 from Arabidopsis thaliana (Mouse-ear cress).